A 179-amino-acid chain; its full sequence is Cell division protein SepF (179 aa).

The disordered stretch occupies residues 18–55 (EDSSLPYEKRDEPVFTPVNSSQEPALPMNQPSQSAGTK). Polar residues predominate over residues 34 to 55 (PVNSSQEPALPMNQPSQSAGTK).

This sequence belongs to the SepF family. Homodimer. Interacts with FtsZ.

It is found in the cytoplasm. Its function is as follows. Cell division protein that is part of the divisome complex and is recruited early to the Z-ring. Probably stimulates Z-ring formation, perhaps through the cross-linking of FtsZ protofilaments. Its function overlaps with FtsA. This is Cell division protein SepF from Streptococcus pneumoniae (strain ATCC 700669 / Spain 23F-1).